The sequence spans 352 residues: Protein RecA (352 aa).

68 to 75 contributes to the ATP binding site; it reads GPESSGKT.

It belongs to the RecA family.

The protein resides in the cytoplasm. Can catalyze the hydrolysis of ATP in the presence of single-stranded DNA, the ATP-dependent uptake of single-stranded DNA by duplex DNA, and the ATP-dependent hybridization of homologous single-stranded DNAs. It interacts with LexA causing its activation and leading to its autocatalytic cleavage. This is Protein RecA from Clostridium perfringens (strain SM101 / Type A).